Consider the following 81-residue polypeptide: ATP synthase subunit c (81 aa).

The next 2 membrane-spanning stretches (helical) occupy residues 5–25 and 57–77; these read IAAG…IGAG and VGLV…FVFA.

The protein belongs to the ATPase C chain family. As to quaternary structure, F-type ATPases have 2 components, F(1) - the catalytic core - and F(0) - the membrane proton channel. F(1) has five subunits: alpha(3), beta(3), gamma(1), delta(1), epsilon(1). F(0) has three main subunits: a(1), b(2) and c(10-14). The alpha and beta chains form an alternating ring which encloses part of the gamma chain. F(1) is attached to F(0) by a central stalk formed by the gamma and epsilon chains, while a peripheral stalk is formed by the delta and b chains.

It localises to the cell membrane. Functionally, f(1)F(0) ATP synthase produces ATP from ADP in the presence of a proton or sodium gradient. F-type ATPases consist of two structural domains, F(1) containing the extramembraneous catalytic core and F(0) containing the membrane proton channel, linked together by a central stalk and a peripheral stalk. During catalysis, ATP synthesis in the catalytic domain of F(1) is coupled via a rotary mechanism of the central stalk subunits to proton translocation. Key component of the F(0) channel; it plays a direct role in translocation across the membrane. A homomeric c-ring of between 10-14 subunits forms the central stalk rotor element with the F(1) delta and epsilon subunits. The polypeptide is ATP synthase subunit c (Mycobacterium sp. (strain JLS)).